The following is a 269-amino-acid chain: 2-dehydro-3-deoxyphosphooctonate aldolase (269 aa).

Belongs to the KdsA family.

It localises to the cytoplasm. The enzyme catalyses D-arabinose 5-phosphate + phosphoenolpyruvate + H2O = 3-deoxy-alpha-D-manno-2-octulosonate-8-phosphate + phosphate. Its pathway is carbohydrate biosynthesis; 3-deoxy-D-manno-octulosonate biosynthesis; 3-deoxy-D-manno-octulosonate from D-ribulose 5-phosphate: step 2/3. It functions in the pathway bacterial outer membrane biogenesis; lipopolysaccharide biosynthesis. The sequence is that of 2-dehydro-3-deoxyphosphooctonate aldolase from Chlamydia felis (strain Fe/C-56) (Chlamydophila felis).